A 265-amino-acid chain; its full sequence is Hydroxyethylthiazole kinase 2 (265 aa).

M39 provides a ligand contact to substrate. K115 and T168 together coordinate ATP. Residue G195 participates in substrate binding.

The protein belongs to the Thz kinase family. Mg(2+) is required as a cofactor.

It carries out the reaction 5-(2-hydroxyethyl)-4-methylthiazole + ATP = 4-methyl-5-(2-phosphooxyethyl)-thiazole + ADP + H(+). It participates in cofactor biosynthesis; thiamine diphosphate biosynthesis; 4-methyl-5-(2-phosphoethyl)-thiazole from 5-(2-hydroxyethyl)-4-methylthiazole: step 1/1. Functionally, catalyzes the phosphorylation of the hydroxyl group of 4-methyl-5-beta-hydroxyethylthiazole (THZ). The sequence is that of Hydroxyethylthiazole kinase 2 from Clostridium botulinum (strain Okra / Type B1).